Consider the following 188-residue polypeptide: dCTP deaminase (188 aa).

DCTP is bound by residues 111-116, 135-137, Q156, Y170, and Q180; these read KSTYAR and TLE. E137 serves as the catalytic Proton donor/acceptor.

This sequence belongs to the dCTP deaminase family. Homotrimer.

The enzyme catalyses dCTP + H2O + H(+) = dUTP + NH4(+). It participates in pyrimidine metabolism; dUMP biosynthesis; dUMP from dCTP (dUTP route): step 1/2. Catalyzes the deamination of dCTP to dUTP. The protein is dCTP deaminase of Legionella pneumophila (strain Paris).